We begin with the raw amino-acid sequence, 362 residues long: Innexin-17 (362 aa).

Transmembrane regions (helical) follow at residues 27 to 47, 101 to 121, 189 to 209, and 266 to 286; these read YFTV…QYVG, WVPF…VIWN, FLAT…MGLG, and LFIA…FDIF.

It belongs to the pannexin family.

Its subcellular location is the cell membrane. The protein localises to the cell junction. It is found in the gap junction. In terms of biological role, structural component of the gap junctions. This chain is Innexin-17, found in Caenorhabditis elegans.